Here is a 328-residue protein sequence, read N- to C-terminus: Sin3 histone deacetylase corepressor complex component SDS3 (328 aa).

Positions 1–16 (MSAAGLLAPAPAQAGA) are enriched in low complexity. Positions 1 to 65 (MSAAGLLAPA…DLAKHDEEDY (65 aa)) are disordered. Ser-2 is subject to N-acetylserine. The segment at 2–170 (SAAGLLAPAP…IENEKLTMEL (169 aa)) is mediates interaction with USP17L2. 2 stretches are compositionally biased toward acidic residues: residues 23 to 37 (YPEE…EEDE) and 45 to 54 (SDEDTEDASE). A phosphoserine mark is found at Ser-32 and Ser-45. The residue at position 49 (Thr-49) is a Phosphothreonine. Ser-53 bears the Phosphoserine mark. Positions 56–65 (DLAKHDEEDY) are enriched in basic and acidic residues. A coiled-coil region spans residues 66–171 (VEMKEQMYQD…ENEKLTMELT (106 aa)). Glycyl lysine isopeptide (Lys-Gly) (interchain with G-Cter in SUMO2) cross-links involve residues Lys-69, Lys-178, and Lys-201. The sin3 interaction domain (SID) stretch occupies residues 188 to 226 (RPNDPVPIPDKRRKPAPAQLNYLLTDEQIMEDLRTLNKL). The segment at 226 to 252 (LKSPKRPASPSSPEHLPATPAESPAQR) is disordered. Phosphoserine occurs at positions 228, 234, and 237. Thr-244 carries the post-translational modification Phosphothreonine.

The protein belongs to the SDS3 family. Interacts with HCFC1. Homodimer. Component of the SIN3 histone deacetylase (HDAC) corepressor complex. Interacts with SIN3A. Interaction with SIN3B enhances the interaction between SIN3B and HDAC1 to form a complex. Component of a mSin3A corepressor complex that contains SIN3A, SAP130, SUDS3/SAP45, ARID4B/SAP180, HDAC1 and HDAC2. Interacts with USP17L2; the interaction is direct. Interacts with FOXK2. In terms of processing, polyubiquitinated. 'Lys-63'-polyubiquitinated SUDS3 positively regulates histone deacetylation. Regulated through deubiquitination by USP17L2/USP17 that cleaves 'Lys-63'-linked ubiquitin chains.

The protein localises to the nucleus. Regulatory protein which represses transcription and augments histone deacetylase activity of HDAC1. May have a potential role in tumor suppressor pathways through regulation of apoptosis. May function in the assembly and/or enzymatic activity of the mSin3A corepressor complex or in mediating interactions between the complex and other regulatory complexes. The sequence is that of Sin3 histone deacetylase corepressor complex component SDS3 (SUDS3) from Pongo abelii (Sumatran orangutan).